The primary structure comprises 353 residues: Protein RecA (353 aa).

Position 74-81 (74-81 (GPESSGKT)) interacts with ATP.

This sequence belongs to the RecA family.

The protein localises to the cytoplasm. Its function is as follows. Can catalyze the hydrolysis of ATP in the presence of single-stranded DNA, the ATP-dependent uptake of single-stranded DNA by duplex DNA, and the ATP-dependent hybridization of homologous single-stranded DNAs. It interacts with LexA causing its activation and leading to its autocatalytic cleavage. The chain is Protein RecA from Bordetella bronchiseptica (strain ATCC BAA-588 / NCTC 13252 / RB50) (Alcaligenes bronchisepticus).